The sequence spans 201 residues: Adenylyl-sulfate kinase (201 aa).

Position 35–42 (35–42) interacts with ATP; that stretch reads GLSGSGKS. Catalysis depends on Ser109, which acts as the Phosphoserine intermediate.

Belongs to the APS kinase family.

The catalysed reaction is adenosine 5'-phosphosulfate + ATP = 3'-phosphoadenylyl sulfate + ADP + H(+). It functions in the pathway sulfur metabolism; hydrogen sulfide biosynthesis; sulfite from sulfate: step 2/3. Functionally, catalyzes the synthesis of activated sulfate. This chain is Adenylyl-sulfate kinase, found in Salmonella paratyphi C (strain RKS4594).